A 182-amino-acid polypeptide reads, in one-letter code: CASP-like protein 2B1 (182 aa).

Topologically, residues 1–12 (MKLIDRRMRLTE) are cytoplasmic. A helical transmembrane segment spans residues 13 to 31 (LLLRCSISVFALLALILVV). The Extracellular segment spans residues 32–52 (TDTEVKLIFTIKKTAKYTDMK). Residues 53 to 73 (AVVFLVVANGIAAVYSLLQSV) traverse the membrane as a helical segment. Residues 74-89 (RCVVGTMKGRVLFSKP) lie on the Cytoplasmic side of the membrane. Residues 90 to 110 (LAWAFFSGDQAMAYLNVAAIA) form a helical membrane-spanning segment. The Extracellular portion of the chain corresponds to 111 to 141 (ATAESGVIAREGEEDLQWMRVCNMYGKFCNQ). Residues 142–162 (MAIGVSSALLASIAMVFVSCI) form a helical membrane-spanning segment. The Cytoplasmic segment spans residues 163–182 (SAFSLFRLYGATRDRRTTPW).

It belongs to the Casparian strip membrane proteins (CASP) family. In terms of assembly, homodimer and heterodimers.

Its subcellular location is the cell membrane. The chain is CASP-like protein 2B1 from Arabidopsis lyrata subsp. lyrata (Lyre-leaved rock-cress).